A 107-amino-acid polypeptide reads, in one-letter code: UPF0145 protein CHY_0465 (107 aa).

Belongs to the UPF0145 family.

The polypeptide is UPF0145 protein CHY_0465 (Carboxydothermus hydrogenoformans (strain ATCC BAA-161 / DSM 6008 / Z-2901)).